The primary structure comprises 30 residues: MKNKSLFEVIKIGKVEVXXKIXMAVMGAFG.

In terms of assembly, dodecamer; tetramer of trimers. The cofactor is iron-sulfur cluster. FAD is required as a cofactor. FMN serves as cofactor.

The enzyme catalyses butanoate + NAD(+) = (2E)-2-butenoate + NADH + H(+). Functionally, involved in fermentation of amino acids (Stickland reaction) such as leucine, isoleucine, valine and phenylalanine. This Clostridium tyrobutyricum protein is 2-enoate reductase.